A 253-amino-acid polypeptide reads, in one-letter code: MALYNVDGIVIRVRNFQDADKIVVLLTREEGKVEAVARGARRPRNRFAAATQLFSHVRAQLFSGRSLDTLSQVEIVESFRQLREDLVRMAYATYACELVDALLPERQRQEAPYLLLLTSLHLWGEPDRDPEPLLRAFELKLLSMLGFRPSLAACVGCGSEAVQQNGGVRFAPVLGGVLCPQCTDEGEGALRLSLGALETMKRLLDGDIRRAHMVRLSGELAAEIDRALSAYILARTERRLKSKEFLDTLRSAR.

The protein belongs to the RecO family.

Its function is as follows. Involved in DNA repair and RecF pathway recombination. The sequence is that of DNA repair protein RecO from Symbiobacterium thermophilum (strain DSM 24528 / JCM 14929 / IAM 14863 / T).